The following is a 154-amino-acid chain: Prefoldin subunit 2 (154 aa).

Residues 124 to 139 (IRLMGEDEKPAAKENS) are compositionally biased toward basic and acidic residues. The disordered stretch occupies residues 124 to 154 (IRLMGEDEKPAAKENSEGAGAKASSAGVLVS). A compositionally biased stretch (low complexity) spans 140-154 (EGAGAKASSAGVLVS).

The protein belongs to the prefoldin subunit beta family. As to quaternary structure, heterohexamer of two PFD-alpha type and four PFD-beta type subunits. Component of the PAQosome complex which is responsible for the biogenesis of several protein complexes and which consists of R2TP complex members RUVBL1, RUVBL2, RPAP3 and PIH1D1, URI complex members PFDN2, PFDN6, PDRG1, UXT and URI1 as well as ASDURF, POLR2E and DNAAF10/WDR92. Interacts with URI1; the interaction is phosphorylation-dependent and occurs in a growth-dependent manner.

It localises to the nucleus. The protein resides in the cytoplasm. The protein localises to the mitochondrion. Its function is as follows. Binds specifically to cytosolic chaperonin (c-CPN) and transfers target proteins to it. Binds to nascent polypeptide chain and promotes folding in an environment in which there are many competing pathways for nonnative proteins. This chain is Prefoldin subunit 2 (PFDN2), found in Homo sapiens (Human).